The chain runs to 616 residues: Chaperone protein HscA (616 aa).

Belongs to the heat shock protein 70 family.

Its function is as follows. Chaperone involved in the maturation of iron-sulfur cluster-containing proteins. Has a low intrinsic ATPase activity which is markedly stimulated by HscB. Involved in the maturation of IscU. In Edwardsiella ictaluri (strain 93-146), this protein is Chaperone protein HscA.